A 173-amino-acid chain; its full sequence is ATP synthase subunit b (173 aa).

The helical transmembrane segment at 18–38 (IFWSLVILIIVAVFFYKFFLP) threads the bilayer.

This sequence belongs to the ATPase B chain family. In terms of assembly, F-type ATPases have 2 components, F(1) - the catalytic core - and F(0) - the membrane proton channel. F(1) has five subunits: alpha(3), beta(3), gamma(1), delta(1), epsilon(1). F(0) has three main subunits: a(1), b(2) and c(10-14). The alpha and beta chains form an alternating ring which encloses part of the gamma chain. F(1) is attached to F(0) by a central stalk formed by the gamma and epsilon chains, while a peripheral stalk is formed by the delta and b chains.

Its subcellular location is the cell membrane. F(1)F(0) ATP synthase produces ATP from ADP in the presence of a proton or sodium gradient. F-type ATPases consist of two structural domains, F(1) containing the extramembraneous catalytic core and F(0) containing the membrane proton channel, linked together by a central stalk and a peripheral stalk. During catalysis, ATP synthesis in the catalytic domain of F(1) is coupled via a rotary mechanism of the central stalk subunits to proton translocation. Functionally, component of the F(0) channel, it forms part of the peripheral stalk, linking F(1) to F(0). This Bifidobacterium adolescentis (strain ATCC 15703 / DSM 20083 / NCTC 11814 / E194a) protein is ATP synthase subunit b.